Consider the following 1005-residue polypeptide: Translocated actin-recruiting phosphoprotein (1005 aa).

Residues 1-10 (MTNSISGDQP) are compositionally biased toward polar residues. 7 disordered regions span residues 1-36 (MTNS…SVST), 74-128 (PTVT…DYEP), 191-214 (SIDD…NSLR), 343-365 (SIDD…LNSL), 611-645 (WGTQ…TPSS), 661-748 (NIRD…DGPA), and 792-847 (TGTS…TSLM). 2 stretches are compositionally biased toward low complexity: residues 11–36 (TVTT…SVST) and 74–121 (PTVT…SSDH). Composition is skewed to polar residues over residues 191-205 (SIDD…NTSG) and 343-357 (SIDD…NTSG). Composition is skewed to low complexity over residues 661 to 700 (NIRD…TDDI), 715 to 734 (GDIS…VSSS), and 831 to 846 (STTT…TTSL).

The protein belongs to the chlamydial CPn_0572/CT_456/TC_0741 family. In terms of processing, phosphorylated on a tyrosine on attachment to the host cell. Tyrosine phosphorylation is temporally and spatially associated with recruitment of actin to the site of chlamydial entry. Phosphorylated Tarp seems to remain cytoplasmically exposed on the inclusion membrane at one side of internalized elementary bodies for several hours after entry.

Its subcellular location is the secreted. Its function is as follows. Appears to initiate or participate in signaling events that regulate the actin recruitment, which ultimately leads to internalization. This is Translocated actin-recruiting phosphoprotein (tarP) from Chlamydia trachomatis serovar L2 (strain ATCC VR-902B / DSM 19102 / 434/Bu).